The primary structure comprises 232 residues: Ribonuclease 3 (232 aa).

The RNase III domain occupies 7-136 (AALLEDTIDY…LLGAVFCDGG (130 aa)). Residue Glu49 participates in Mg(2+) binding. Asp53 is a catalytic residue. Mg(2+) is bound by residues Asn122 and Glu125. Glu125 is an active-site residue. In terms of domain architecture, DRBM spans 163-232 (DYKTRLQERL…AKQALEYLEE (70 aa)).

It belongs to the ribonuclease III family. In terms of assembly, homodimer. Mg(2+) serves as cofactor.

It localises to the cytoplasm. It carries out the reaction Endonucleolytic cleavage to 5'-phosphomonoester.. Digests double-stranded RNA. Involved in the processing of primary rRNA transcript to yield the immediate precursors to the large and small rRNAs (23S and 16S). Processes some mRNAs, and tRNAs when they are encoded in the rRNA operon. Processes pre-crRNA and tracrRNA of type II CRISPR loci if present in the organism. The sequence is that of Ribonuclease 3 from Syntrophotalea carbinolica (strain DSM 2380 / NBRC 103641 / GraBd1) (Pelobacter carbinolicus).